The primary structure comprises 1059 residues: WD repeat-containing protein on Y chromosome (1059 aa).

11 WD repeats span residues 121–161, 170–209, 214–256, 344–383, 387–426, 476–515, 528–567, 616–658, 714–759, 766–805, and 849–888; these read DFCP…ALTA, RSKTWVLDTVPLPDLSMFCVTGLETELRLYNVVAACFTLK, RLPQ…KVTT, CVPRGVTCFAFEPSNELLVSGGPDCDLRLWDIHRPEKPSV, GHTSSITFLFLQDAGEKIYSLDQRKIIKVWDVRNRVLLQT, SHTKPVSVLLYNGLYRLVVSCGFDSFIIVWDHRVNRKMTI, LEPVEITAACFDGKEQMLLTGARNGSLKIWNIGGRTCMRT, QHSD…RRYD, MRQL…GFKG, MAGDRIITLATDKANRFLFTGTALGYVKTWYIENCWIPNE, and AHRACVTGLTYLDDTGLLLSCSSDRTVRLWTLGGRYIGLL.

This Anopheles gambiae (African malaria mosquito) protein is WD repeat-containing protein on Y chromosome.